The primary structure comprises 285 residues: 2-dehydro-3-deoxyphosphooctonate aldolase (285 aa).

Belongs to the KdsA family.

Its subcellular location is the cytoplasm. It catalyses the reaction D-arabinose 5-phosphate + phosphoenolpyruvate + H2O = 3-deoxy-alpha-D-manno-2-octulosonate-8-phosphate + phosphate. It participates in carbohydrate biosynthesis; 3-deoxy-D-manno-octulosonate biosynthesis; 3-deoxy-D-manno-octulosonate from D-ribulose 5-phosphate: step 2/3. The protein operates within bacterial outer membrane biogenesis; lipopolysaccharide biosynthesis. This chain is 2-dehydro-3-deoxyphosphooctonate aldolase, found in Acidovorax sp. (strain JS42).